Consider the following 763-residue polypeptide: Phosphoglycerol transferase I (763 aa).

The next 4 helical transmembrane spans lie at 1–21 (MSEL…AWKA), 26–46 (WWFA…ITLF), 77–97 (ILPG…LGWI), and 108–128 (FGYS…SPAF).

This sequence belongs to the OpgB family.

Its subcellular location is the cell inner membrane. It catalyses the reaction a phosphatidylglycerol + a membrane-derived-oligosaccharide D-glucose = a 1,2-diacyl-sn-glycerol + a membrane-derived-oligosaccharide 6-(glycerophospho)-D-glucose.. Its pathway is glycan metabolism; osmoregulated periplasmic glucan (OPG) biosynthesis. Functionally, transfers a phosphoglycerol residue from phosphatidylglycerol to the membrane-bound nascent glucan backbones. The chain is Phosphoglycerol transferase I from Escherichia coli O17:K52:H18 (strain UMN026 / ExPEC).